The following is a 400-amino-acid chain: 1-deoxy-D-xylulose 5-phosphate reductoisomerase (400 aa).

NADPH-binding residues include T17, G18, S19, I20, and N131. K132 provides a ligand contact to 1-deoxy-D-xylulose 5-phosphate. An NADPH-binding site is contributed by E133. A Mn(2+)-binding site is contributed by D157. 1-deoxy-D-xylulose 5-phosphate-binding residues include S158, E159, S188, and H211. Mn(2+) is bound at residue E159. G217 lines the NADPH pocket. S224, N229, K230, and E233 together coordinate 1-deoxy-D-xylulose 5-phosphate. E233 lines the Mn(2+) pocket.

Belongs to the DXR family. Requires Mg(2+) as cofactor. It depends on Mn(2+) as a cofactor.

The enzyme catalyses 2-C-methyl-D-erythritol 4-phosphate + NADP(+) = 1-deoxy-D-xylulose 5-phosphate + NADPH + H(+). Its pathway is isoprenoid biosynthesis; isopentenyl diphosphate biosynthesis via DXP pathway; isopentenyl diphosphate from 1-deoxy-D-xylulose 5-phosphate: step 1/6. In terms of biological role, catalyzes the NADPH-dependent rearrangement and reduction of 1-deoxy-D-xylulose-5-phosphate (DXP) to 2-C-methyl-D-erythritol 4-phosphate (MEP). The protein is 1-deoxy-D-xylulose 5-phosphate reductoisomerase of Pseudomonas putida (strain ATCC 700007 / DSM 6899 / JCM 31910 / BCRC 17059 / LMG 24140 / F1).